The sequence spans 534 residues: Signal recognition particle subunit SRP54 (534 aa).

The interval 1 to 296 (MVLQDLGRRI…EPKAFIQKLL (296 aa)) is G-domain. GTP-binding positions include 109–116 (GLQGAGKT), 191–195 (DTSGR), and 249–252 (TKTD). The segment at 297–534 (GMGDMAGLVE…GGGGGRGRGR (238 aa)) is M-domain.

Belongs to the GTP-binding SRP family. SRP54 subfamily. As to quaternary structure, fungal signal recognition particle consists of a 7S RNA molecule (scR1) and at least six protein subunits: srp72, srp68, srpA/srp54, sec65, srp21 and srp14.

Its subcellular location is the cytoplasm. It is found in the endoplasmic reticulum. The catalysed reaction is GTP + H2O = GDP + phosphate + H(+). In terms of biological role, signal-recognition-particle (SRP) assembly has a crucial role in targeting secretory proteins to the rough endoplasmic reticulum (ER) membrane. SRP is required for the cotranslational protein translocation for ER import and preferentially recognizes strongly hydrophobic signal sequences. It is involved in targeting the nascent chain-ribosome (RNC) complex to the ER and is proposed to participate in the arrest of nascent chain elongation during membrane targeting. srpA/srp54 binds to the signal sequence of presecretory protein when they emerge from the ribosomes. srpA/srp54 interacts with the scR1 RNA and mediates the association of the resulting SRP-RNC complex with the signal recognition particle receptor (SR) via its alpha subunit srp101. Both, srpA/srp54 and srp101, are locked in their GTP bound forms in the SRP-RNC-SR complex, which dissociates upon transferring the signal sequence to the protein-conducting channel (translocon). After signal sequence transfer, srpA/srp54 and srp101 act as reciprocal GTPase-activating proteins (GAPs), thereby resolving their association. The sequence is that of Signal recognition particle subunit SRP54 (srpA) from Aspergillus niger.